We begin with the raw amino-acid sequence, 490 residues long: Glycine--tRNA ligase (490 aa).

Residues arginine 99 and glutamate 163 each contribute to the substrate site. ATP-binding positions include 195 to 197, 205 to 210, 282 to 283, and 326 to 329; these read RNE, FRTREF, EL, and GLTR. Residue 210-214 coordinates substrate; the sequence is FEQME. 322–326 is a binding site for substrate; the sequence is EPAAG. The tract at residues 470–490 is disordered; that stretch reads PVEMGGEPWPESGVQEAGGLY.

This sequence belongs to the class-II aminoacyl-tRNA synthetase family. As to quaternary structure, homodimer.

It localises to the cytoplasm. The enzyme catalyses tRNA(Gly) + glycine + ATP = glycyl-tRNA(Gly) + AMP + diphosphate. Its function is as follows. Catalyzes the attachment of glycine to tRNA(Gly). This is Glycine--tRNA ligase from Bifidobacterium longum (strain NCC 2705).